The chain runs to 602 residues: Elongation factor 4 (602 aa).

One can recognise a tr-type G domain in the interval 2–184 (KKIRNFAIIA…RIVRDIPPPK (183 aa)). Residues 14–19 (DHGKST) and 131–134 (NKID) each bind GTP.

This sequence belongs to the TRAFAC class translation factor GTPase superfamily. Classic translation factor GTPase family. LepA subfamily.

The protein localises to the cell membrane. It carries out the reaction GTP + H2O = GDP + phosphate + H(+). In terms of biological role, required for accurate and efficient protein synthesis under certain stress conditions. May act as a fidelity factor of the translation reaction, by catalyzing a one-codon backward translocation of tRNAs on improperly translocated ribosomes. Back-translocation proceeds from a post-translocation (POST) complex to a pre-translocation (PRE) complex, thus giving elongation factor G a second chance to translocate the tRNAs correctly. Binds to ribosomes in a GTP-dependent manner. This is Elongation factor 4 from Baumannia cicadellinicola subsp. Homalodisca coagulata.